Consider the following 310-residue polypeptide: Acetaldehyde dehydrogenase 1 (310 aa).

12-15 (SGNI) serves as a coordination point for NAD(+). The active-site Acyl-thioester intermediate is cysteine 127. NAD(+) is bound by residues 163–171 (SAGPGTRAN) and asparagine 282.

Belongs to the acetaldehyde dehydrogenase family.

It catalyses the reaction acetaldehyde + NAD(+) + CoA = acetyl-CoA + NADH + H(+). The chain is Acetaldehyde dehydrogenase 1 from Mycobacterium sp. (strain KMS).